The chain runs to 262 residues: 2-keto-4-pentenoate hydratase (262 aa).

It belongs to the hydratase/decarboxylase family. MhpD subfamily. A divalent metal cation is required as a cofactor.

It carries out the reaction (S)-4-hydroxy-2-oxopentanoate = (2Z)-2-hydroxypenta-2,4-dienoate + H2O. It participates in aromatic compound metabolism; 3-phenylpropanoate degradation. Catalyzes the conversion of 2-hydroxypentadienoic acid (enolic form of 2-oxopent-4-enoate) to 4-hydroxy-2-ketopentanoic acid. This Paraburkholderia phymatum (strain DSM 17167 / CIP 108236 / LMG 21445 / STM815) (Burkholderia phymatum) protein is 2-keto-4-pentenoate hydratase.